The chain runs to 106 residues: Large ribosomal subunit protein P2 (106 aa).

Residues 79–106 (GAGAVAEAKKEEPEEEEADDDMGFGLFD) are disordered. Residues 91-100 (PEEEEADDDM) are compositionally biased toward acidic residues.

Belongs to the eukaryotic ribosomal protein P1/P2 family. In terms of assembly, P1 and P2 exist as dimers at the large ribosomal subunit. In terms of processing, phosphorylated.

In terms of biological role, plays an important role in the elongation step of protein synthesis. This chain is Large ribosomal subunit protein P2 (LIP), found in Leishmania infantum.